The sequence spans 34 residues: U2-theraphotoxin-Bs1a (34 aa).

Cystine bridges form between Cys-2/Cys-16, Cys-9/Cys-21, and Cys-15/Cys-28.

In terms of tissue distribution, expressed by the venom gland.

It localises to the secreted. This chain is U2-theraphotoxin-Bs1a, found in Brachypelma smithi (Mexican red knee tarantula).